We begin with the raw amino-acid sequence, 256 residues long: 2,3,4,5-tetrahydropyridine-2,6-dicarboxylate N-acetyltransferase (256 aa).

It belongs to the transferase hexapeptide repeat family. DapH subfamily.

It carries out the reaction (S)-2,3,4,5-tetrahydrodipicolinate + acetyl-CoA + H2O = L-2-acetamido-6-oxoheptanedioate + CoA. It functions in the pathway amino-acid biosynthesis; L-lysine biosynthesis via DAP pathway; LL-2,6-diaminopimelate from (S)-tetrahydrodipicolinate (acetylase route): step 1/3. In terms of biological role, catalyzes the transfer of an acetyl group from acetyl-CoA to tetrahydrodipicolinate. The sequence is that of 2,3,4,5-tetrahydropyridine-2,6-dicarboxylate N-acetyltransferase from Lactococcus lactis subsp. cremoris (strain MG1363).